Here is a 555-residue protein sequence, read N- to C-terminus: Connector enhancer of kinase suppressor of ras 3 (555 aa).

Positions 7–72 constitute an SAM domain; sequence WSPKQVVDWT…LEAVDLLCAL (66 aa). In terms of domain architecture, CRIC spans 80–174; it reads TMKNLVLKLR…TAVQKDCLIA (95 aa). A PDZ domain is found at 211 to 293; it reads EVHLPNVRPG…GVVLLLKKRP (83 aa). Disordered stretches follow at residues 308–333, 362–389, and 518–538; these read RWKPPLVQTSPPPTTTQSPESTMDAS, SFGYRGHSKSKQPLPVRKGSESPNSFLD, and PFQEEGSKKKSASSSAKASSG. Residues 311 to 329 show a composition bias toward low complexity; sequence PPLVQTSPPPTTTQSPEST. In terms of domain architecture, DUF1170 spans 325–546; it reads SPESTMDASL…SGEPSLLVSW (222 aa). Ser381 and Ser383 each carry phosphoserine.

The protein belongs to the CNKSR family. Interacts with epithelial sodium channel ENaC. Interacts directly with SCNN1A (ENaC subunit alpha) and SCNN1B (ENaC subunit beta) C-terminal tails. Interacts with ENaC regulatory proteins NEDD4L, RAF1 and SGK1. In terms of tissue distribution, expressed in kidney.

Its subcellular location is the cytoplasm. It localises to the apical cell membrane. Its function is as follows. Involved in transepithelial sodium transport. Regulates aldosterone-induced and epithelial sodium channel (ENaC)-mediated sodium transport through regulation of ENaC cell surface expression. Acts as a scaffold protein coordinating the assembly of an ENaC-regulatory complex (ERC). The chain is Connector enhancer of kinase suppressor of ras 3 (Cnksr3) from Mus musculus (Mouse).